The following is a 260-amino-acid chain: MTNDDLTITDPKMRAQGVNVFYGDKQAINNVSIDVGTDLVTAFIGPSGCGKSTFLRSLNRMNDTVASAKVTGKIELDGEDIYAPSMDVVQLRARVGMVFQKPNPFPKSIYDNVGYGPRIHGLAPSKADLDVVVERALVRAGLWDEVKDRLNESGTALSGGQQQRLCIARAIAVDPEVILMDEPCSALDPIATAKIEELIHELRGKYAIVIVTHNMQQAARVSQRTAFFHLGTLVEYGKTTDIFTNPKQERTKDYITGRYG.

One can recognise an ABC transporter domain in the interval 13–255; it reads MRAQGVNVFY…PKQERTKDYI (243 aa). 45–52 provides a ligand contact to ATP; sequence GPSGCGKS.

It belongs to the ABC transporter superfamily. Phosphate importer (TC 3.A.1.7) family. In terms of assembly, the complex is composed of two ATP-binding proteins (PstB), two transmembrane proteins (PstC and PstA) and a solute-binding protein (PstS).

The protein resides in the cell inner membrane. It catalyses the reaction phosphate(out) + ATP + H2O = ADP + 2 phosphate(in) + H(+). Part of the ABC transporter complex PstSACB involved in phosphate import. Responsible for energy coupling to the transport system. This chain is Phosphate import ATP-binding protein PstB, found in Sphingopyxis alaskensis (strain DSM 13593 / LMG 18877 / RB2256) (Sphingomonas alaskensis).